A 796-amino-acid chain; its full sequence is RalBP1-associated Eps domain-containing protein 1 (796 aa).

Residues 10–113 (EQKYYSDLFS…SKNEQESRHA (104 aa)) enclose the EH 1 domain. A disordered region spans residues 105-237 (KNEQESRHAA…ENWVSFADTP (133 aa)). Polar residues predominate over residues 115 to 126 (SYSSDSENQGSY). A phosphoserine mark is found at S143, S145, S162, S166, and S170. The segment covering 145–156 (SHDTVQPRTSAD) has biased composition (polar residues). At T173 the chain carries Phosphothreonine. S272 and S273 each carry phosphoserine. In terms of domain architecture, EH 2 spans 285–374 (QRQYYVNQFK…ESLMPKLIDL (90 aa)). Y288 bears the Phosphotyrosine mark. S307 is modified (phosphoserine). The EF-hand domain maps to 318–353 (LPILELSHIWELSDFDKDGALTLDEFCAAFHLVVAR). Ca(2+)-binding residues include D331, D333, D335, and E342. Positions 377–433 (SADVGDQPGEVGYSGSPAEAPPSKSPSMPSLNQTWPELNQSSEQWETFSERSSSSQT) are disordered. Over residues 407–433 (LNQTWPELNQSSEQWETFSERSSSSQT) the composition is skewed to polar residues. Residues S475, S482, S489, and S540 each carry the phosphoserine modification. Positions 506–543 (GNTVADGYSSSDSFTSDPEQIGSNVTRQRSHSGTSPDN) are enriched in polar residues. Disordered stretches follow at residues 506 to 624 (GNTV…IPEQ) and 638 to 725 (ASNV…QKTG). T544 bears the Phosphothreonine mark. Positions 544 to 554 (TAPPPPPPRPQ) are enriched in pro residues. S562 bears the Phosphoserine mark. Positions 563-574 (LDMNRTFTVTTG) are enriched in polar residues. Over residues 575 to 584 (QQQAGVVAHP) the composition is skewed to low complexity. Positions 585-596 (PAVPPRPQPSQA) are enriched in pro residues. Over residues 612–623 (THTSTSPQQIPE) the composition is skewed to polar residues. The interaction with RALBP1 stretch occupies residues 652–796 (HPEVLPAEKA…LEQLRPFSHL (145 aa)). Basic and acidic residues-rich tracts occupy residues 671–681 (AKTDSKTEEKT) and 708–722 (KSEDELRPEVDEHTQ). 2 positions are modified to phosphoserine: S709 and S740. The stretch at 751–791 (SIRRNKETNTVLARLNSELQQQLKDVLEERISLEVQLEQLR) forms a coiled coil.

In terms of assembly, homodimer (Potential). Interacts with RAB11FIP2. Interacts with RALBP1, CRK and GRB2. Binding to RALBP1 does not affect its Ral-binding activity. Forms a complex with the SH3 domains of CRK and GRB2 which may link it to an EGF-responsive tyrosine kinase. Interacts with AMPH, ITSN1 (via SH3 domains) and SGIP1; may be involved in clathrin-mediated endocytosis. In terms of processing, EGF stimulates phosphorylation on Tyr-residues. Widely expressed with highest levels in heart and testis.

The protein localises to the membrane. Its subcellular location is the clathrin-coated pit. Its function is as follows. May coordinate the cellular actions of activated EGF receptors and Ral-GTPases. In Homo sapiens (Human), this protein is RalBP1-associated Eps domain-containing protein 1 (REPS1).